A 458-amino-acid polypeptide reads, in one-letter code: MTEPKKEIIEDENHGISKKIPTDPRQYEKVTEGCRLLVMMASQEEERWAEVISRCRAANGSIKFYVHYIDCNRRLDEWVQSDRLNLASCELPKKGGKKGAHLREENRDSNENEGKKSGRKRKIPLLPMDDLKAESVDPLQAISTMTSGSTPSLRGSMSMVGHSEDAMTRIRNVECIELGRSRIQPWYFAPYPQQLTSLDCIYICEFCLKYLKSKTCLKRHMEKCAMCHPPGNQIYSHDKLSFFEIDGRKNKSYAQNLCLLAKLFLDHKTLYYDTDPFLFYVLTEEDEKGHHIVGYFSKEKESAEEYNVACILVLPPFQKKGYGSLLIEFSYELSKIEQKTGSPEKPLSDLGLLSYRSYWSMAIMKELFAFKRRHPGEDITVQDISQSTSIKREDVVSTLQQLDLYKYYKGSYIIVISDEKRQVYEKRIEAAKKKTRINPAALQWRPKEYGKKRAQIMF.

The segment at 1 to 24 (MTEPKKEIIEDENHGISKKIPTDP) is disordered. Residues 30 to 86 (VTEGCRLLVMMASQEEERWAEVISRCRAANGSIKFYVHYIDCNRRLDEWVQSDRLNL) enclose the Tudor-knot domain. Positions 94 to 123 (KGGKKGAHLREENRDSNENEGKKSGRKRKI) are disordered. Positions 101–116 (HLREENRDSNENEGKK) are enriched in basic and acidic residues. The 279-residue stretch at 168–446 (TRIRNVECIE…INPAALQWRP (279 aa)) folds into the MYST-type HAT domain. Residues 201-226 (IYICEFCLKYLKSKTCLKRHMEKCAM) form a C2HC MYST-type zinc finger. Lys-268 carries the N6-acetyllysine; by autocatalysis modification. Acetyl-CoA-binding positions include 311–313 (ILV) and 318–324 (QKKGYGS). Glu-344 serves as the catalytic Proton donor/acceptor. Acetyl-CoA-binding residues include Ser-348 and Ser-357.

It belongs to the MYST (SAS/MOZ) family. Interacts with transcription-associated protein trr-1. Probably a component of a complex with histone acetyltransferase (HAT) activity, at least composed of mys-1 and trr-1. Autoacetylation at Lys-268 is required for binding histones with high affinity and for proper function.

Its subcellular location is the nucleus. It catalyses the reaction L-lysyl-[protein] + acetyl-CoA = N(6)-acetyl-L-lysyl-[protein] + CoA + H(+). Probable catalytic subunit of the Tip60 chromatin-remodeling complex. Plays a role in acetylation of nucleosomal histone H4 and perhaps also H2A, probably acting as a component of the Tip60 histone acetyltransferase complex. Acts in the determination of vulval and distal tip cell (DTC) precursor cell fates. Involved in the positive regulation of transcription factor daf-16, probably acting by histone acetylation; thereby modulating stress resistance. This chain is Histone acetyltransferase Tip60 homolog, found in Caenorhabditis elegans.